The primary structure comprises 212 residues: Ribonuclease HII (212 aa).

The RNase H type-2 domain maps to 20–209 (TCIVGVDEVG…VHNILYQEAS (190 aa)). Asp26, Glu27, and Asp117 together coordinate a divalent metal cation.

The protein belongs to the RNase HII family. Requires Mn(2+) as cofactor. It depends on Mg(2+) as a cofactor.

The protein localises to the cytoplasm. It carries out the reaction Endonucleolytic cleavage to 5'-phosphomonoester.. Endonuclease that specifically degrades the RNA of RNA-DNA hybrids. The polypeptide is Ribonuclease HII (Cereibacter sphaeroides (strain ATCC 17025 / ATH 2.4.3) (Rhodobacter sphaeroides)).